Reading from the N-terminus, the 128-residue chain is B2 protein (128 aa).

The N-terminal stretch at 1–10 is a signal peptide; sequence SLILLVAVQA. Cystine bridges form between Cys-26-Cys-57 and Cys-97-Cys-114.

This sequence belongs to the PBP/GOBP family. N-glycosylated. As to expression, tubular accessory sex gland.

The protein localises to the secreted. Its function is as follows. May be a carrier protein for lipids. The protein is B2 protein of Tenebrio molitor (Yellow mealworm beetle).